We begin with the raw amino-acid sequence, 311 residues long: Probable cell division protein WhiA (311 aa).

Positions 277 to 311 form a DNA-binding region, H-T-H motif; it reads TLKEVADQIPDGPISKSGVNHRFKKLHEIAESLRE.

The protein belongs to the WhiA family.

In terms of biological role, involved in cell division and chromosome segregation. This is Probable cell division protein WhiA from Lactobacillus acidophilus (strain ATCC 700396 / NCK56 / N2 / NCFM).